A 691-amino-acid polypeptide reads, in one-letter code: Elongation factor G (691 aa).

One can recognise a tr-type G domain in the interval 8 to 282 (ERVRNIGIAA…AVVDYLPAPV (275 aa)). GTP contacts are provided by residues 17–24 (AHIDAGKT), 81–85 (DTPGH), and 135–138 (NKMD).

Belongs to the TRAFAC class translation factor GTPase superfamily. Classic translation factor GTPase family. EF-G/EF-2 subfamily.

The protein localises to the cytoplasm. Functionally, catalyzes the GTP-dependent ribosomal translocation step during translation elongation. During this step, the ribosome changes from the pre-translocational (PRE) to the post-translocational (POST) state as the newly formed A-site-bound peptidyl-tRNA and P-site-bound deacylated tRNA move to the P and E sites, respectively. Catalyzes the coordinated movement of the two tRNA molecules, the mRNA and conformational changes in the ribosome. In Prochlorococcus marinus (strain MIT 9303), this protein is Elongation factor G.